Consider the following 212-residue polypeptide: Peptide methionine sulfoxide reductase MsrA (212 aa).

Cys52 is a catalytic residue.

The protein belongs to the MsrA Met sulfoxide reductase family.

It carries out the reaction L-methionyl-[protein] + [thioredoxin]-disulfide + H2O = L-methionyl-(S)-S-oxide-[protein] + [thioredoxin]-dithiol. The catalysed reaction is [thioredoxin]-disulfide + L-methionine + H2O = L-methionine (S)-S-oxide + [thioredoxin]-dithiol. Its function is as follows. Has an important function as a repair enzyme for proteins that have been inactivated by oxidation. Catalyzes the reversible oxidation-reduction of methionine sulfoxide in proteins to methionine. The polypeptide is Peptide methionine sulfoxide reductase MsrA (Salmonella agona (strain SL483)).